We begin with the raw amino-acid sequence, 439 residues long: Potassium/proton antiporter CemA (439 aa).

The next 6 helical transmembrane spans lie at 55–75, 79–99, 220–240, 317–337, 364–384, and 399–419; these read IMLYINTNLNNCVFIIYWSLL, ISLFFFDFIKTFVLIISNFFN, YMLFLLFIPWGFSSLLKIWFL, LLHLLTDIVYVITLSAVFILG, ILLLTDLCIGFHSPHGWEIVI, and IISCFVSTFPVILDTVFKYWI.

Belongs to the CemA family.

The protein localises to the plastid. The protein resides in the chloroplast inner membrane. The catalysed reaction is K(+)(in) + H(+)(out) = K(+)(out) + H(+)(in). Its function is as follows. Contributes to K(+)/H(+) antiport activity by supporting proton efflux to control proton extrusion and homeostasis in chloroplasts in a light-dependent manner to modulate photosynthesis. Prevents excessive induction of non-photochemical quenching (NPQ) under continuous-light conditions. Indirectly promotes efficient inorganic carbon uptake into chloroplasts. The sequence is that of Potassium/proton antiporter CemA from Physcomitrium patens (Spreading-leaved earth moss).